The following is a 541-amino-acid chain: Chaperonin GroEL 2 (541 aa).

ATP is bound by residues 29 to 32, 86 to 90, glycine 413, 476 to 478, and aspartate 492; these read TLGP, DGTTT, and NAA.

The protein belongs to the chaperonin (HSP60) family. In terms of assembly, forms a cylinder of 14 subunits composed of two heptameric rings stacked back-to-back. Interacts with the co-chaperonin GroES.

It localises to the cytoplasm. The enzyme catalyses ATP + H2O + a folded polypeptide = ADP + phosphate + an unfolded polypeptide.. Functionally, together with its co-chaperonin GroES, plays an essential role in assisting protein folding. The GroEL-GroES system forms a nano-cage that allows encapsulation of the non-native substrate proteins and provides a physical environment optimized to promote and accelerate protein folding. The polypeptide is Chaperonin GroEL 2 (Streptomyces coelicolor (strain ATCC BAA-471 / A3(2) / M145)).